The following is a 163-amino-acid chain: Nucleotide-binding protein Asuc_2113 (163 aa).

The protein belongs to the YajQ family.

Functionally, nucleotide-binding protein. This is Nucleotide-binding protein Asuc_2113 from Actinobacillus succinogenes (strain ATCC 55618 / DSM 22257 / CCUG 43843 / 130Z).